The following is a 441-amino-acid chain: Homogentisate 1,2-dioxygenase (441 aa).

His-297 functions as the Proton acceptor in the catalytic mechanism. His-340 and Glu-346 together coordinate Fe cation. Positions 355 and 376 each coordinate homogentisate. His-376 lines the Fe cation pocket.

This sequence belongs to the homogentisate dioxygenase family. As to quaternary structure, hexamer; dimer of trimers. Requires Fe cation as cofactor.

It carries out the reaction homogentisate + O2 = 4-maleylacetoacetate + H(+). The protein operates within amino-acid degradation; L-phenylalanine degradation; acetoacetate and fumarate from L-phenylalanine: step 4/6. Its function is as follows. Involved in the catabolism of homogentisate (2,5-dihydroxyphenylacetate or 2,5-OH-PhAc), a central intermediate in the degradation of phenylalanine and tyrosine. Catalyzes the oxidative ring cleavage of the aromatic ring of homogentisate to yield maleylacetoacetate. This Streptomyces coelicolor (strain ATCC BAA-471 / A3(2) / M145) protein is Homogentisate 1,2-dioxygenase.